The chain runs to 92 residues: Small ribosomal subunit protein uS19c (92 aa).

It belongs to the universal ribosomal protein uS19 family.

The protein resides in the plastid. It is found in the chloroplast. Protein S19 forms a complex with S13 that binds strongly to the 16S ribosomal RNA. The chain is Small ribosomal subunit protein uS19c from Manihot esculenta (Cassava).